The following is a 108-amino-acid chain: Large ribosomal subunit protein uL24 (108 aa).

Belongs to the universal ribosomal protein uL24 family. Part of the 50S ribosomal subunit.

Its function is as follows. One of two assembly initiator proteins, it binds directly to the 5'-end of the 23S rRNA, where it nucleates assembly of the 50S subunit. Functionally, one of the proteins that surrounds the polypeptide exit tunnel on the outside of the subunit. The protein is Large ribosomal subunit protein uL24 of Geobacter metallireducens (strain ATCC 53774 / DSM 7210 / GS-15).